The sequence spans 211 residues: Intermembrane phospholipid transport system binding protein MlaC (211 aa).

A signal peptide spans 1–21 (MFKRLMMVALLVIAPLSAATA).

The protein belongs to the MlaC/ttg2D family. In terms of assembly, interacts with the MlaA-OmpF outer membrane complex and with the inner membrane ABC transporter complex MlaFEDB, via direct interaction with MlaD.

It is found in the periplasm. Functionally, involved in a phospholipid transport pathway that maintains lipid asymmetry in the outer membrane by retrograde trafficking of phospholipids from the outer membrane to the inner membrane. May transfer phospholipid across the periplasmic space and deliver it to the MlaFEDB complex at the inner membrane. The protein is Intermembrane phospholipid transport system binding protein MlaC of Escherichia coli (strain K12).